A 477-amino-acid chain; its full sequence is Otoconin-90 (477 aa).

The signal sequence occupies residues 1 to 17; that stretch reads MIAFLLTSVLMIPHAGG. N-linked (GlcNAc...) asparagine glycosylation is present at Asn38. Phospholipase A2-like stretches follow at residues 76–190, 305–361, and 373–425; these read LIQF…TSFC, MPQL…RLGC, and CVDH…PAAC. Intrachain disulfides connect Cys85/Cys145, Cys99/Cys190, Cys101/Cys117, Cys116/Cys172, Cys123/Cys165, Cys132/Cys158, and Cys152/Cys163. A glycan (N-linked (GlcNAc...) asparagine) is linked at Asn179. The N-linked (GlcNAc...) asparagine glycan is linked to Asn407. A disordered region spans residues 428-477; sequence SLHPVPAAPTLGSSSEEDSEEDPPQEDLGRAKRFLRKSLGPLGIGPLHGR. Acidic residues predominate over residues 442 to 452; it reads SEEDSEEDPPQ.

The protein belongs to the phospholipase A2 family. In terms of assembly, interacts with OTOL1.

It localises to the secreted. Major protein of the otoconia, a calcium carbonate structure in the saccule and utricle of the ear. Together with OTOL1, acts as a scaffold for otoconia biomineralization: sequesters calcium and forms interconnecting fibrils between otoconia that are incorporated into the calcium crystal structure. Together with OTOL1, modulates calcite crystal morphology and growth kinetics. It is unlikely that this protein has phospholipase A2 activity. The protein is Otoconin-90 of Homo sapiens (Human).